The chain runs to 85 residues: MGIFDWKHWLIILIVVVLVFGTKRLKTLGSDIGEAIKGFRKAVNTEEGENRPAEPQTGTSAGDTLNKTQTIEGQAQKVDTPVRKD.

The chain crosses the membrane as a helical span at residues 1–21; sequence MGIFDWKHWLIILIVVVLVFG. The segment at 43–85 is disordered; the sequence is VNTEEGENRPAEPQTGTSAGDTLNKTQTIEGQAQKVDTPVRKD. The segment covering 56 to 73 has biased composition (polar residues); sequence QTGTSAGDTLNKTQTIEG.

This sequence belongs to the TatA/E family. As to quaternary structure, the Tat system comprises two distinct complexes: a TatABC complex, containing multiple copies of TatA, TatB and TatC subunits, and a separate TatA complex, containing only TatA subunits. Substrates initially bind to the TatABC complex, which probably triggers association of the separate TatA complex to form the active translocon.

The protein localises to the cell inner membrane. Functionally, part of the twin-arginine translocation (Tat) system that transports large folded proteins containing a characteristic twin-arginine motif in their signal peptide across membranes. TatA could form the protein-conducting channel of the Tat system. The protein is Sec-independent protein translocase protein TatA of Azotobacter vinelandii (strain DJ / ATCC BAA-1303).